Consider the following 62-residue polypeptide: uncharacterized protein (62 aa).

Residues 26 to 62 (YELATLYEAMQKENEEQIEQSKNKLERLRKEWIRLNG) are a coiled coil.

This is an uncharacterized protein from Bacillus subtilis (strain 168).